A 417-amino-acid polypeptide reads, in one-letter code: Aminoacyltransferase FemB (417 aa).

This sequence belongs to the FemABX family.

The protein resides in the cytoplasm. It carries out the reaction MurNAc-L-Ala-D-isoglutaminyl-L-Lys-(N(6)-tri-Gly)-D-Ala-D-Ala-diphospho-di-trans,octa-cis-undecaprenyl-GlcNAc + 2 glycyl-tRNA(Gly) = MurNAc-L-Ala-D-isoglutaminyl-L-Lys-(N(6)-penta-Gly)-D-Ala-D-Ala-diphospho-di-trans,octa-cis-undecaprenyl-GlcNAc + 2 tRNA(Gly) + 2 H(+). Its function is as follows. Catalyzes the incorporation of amino acid(s) into the interchain peptide bridge of peptidoglycan, using aminoacyl-tRNA as amino acid donor. This Staphylococcus epidermidis protein is Aminoacyltransferase FemB (femB).